We begin with the raw amino-acid sequence, 559 residues long: Chaperonin GroEL 3 (559 aa).

Residues 88–92, glycine 426, and aspartate 507 contribute to the ATP site; that span reads DGTTT.

This sequence belongs to the chaperonin (HSP60) family. As to quaternary structure, forms a cylinder of 14 subunits composed of two heptameric rings stacked back-to-back. Interacts with the co-chaperonin GroES.

It is found in the cytoplasm. It catalyses the reaction ATP + H2O + a folded polypeptide = ADP + phosphate + an unfolded polypeptide.. Functionally, together with its co-chaperonin GroES, plays an essential role in assisting protein folding. The GroEL-GroES system forms a nano-cage that allows encapsulation of the non-native substrate proteins and provides a physical environment optimized to promote and accelerate protein folding. The sequence is that of Chaperonin GroEL 3 from Methylococcus capsulatus (strain ATCC 33009 / NCIMB 11132 / Bath).